A 153-amino-acid polypeptide reads, in one-letter code: MSEKPVLGIQDIQNLLPHRYPFLLVDKILSYDLNTRSIVAQKNVTINEPFFVGHFPEAPIMPGVLILEALAQAAGVLLGIILENDRDKKIALFLGIQKAKFRQPVKPGDVLILKAEFSLISAKGGKAIAQAFVGSQIVAEGELSFVLVKKESI.

His-54 is a catalytic residue.

Belongs to the thioester dehydratase family. FabZ subfamily.

It localises to the cytoplasm. It carries out the reaction a (3R)-hydroxyacyl-[ACP] = a (2E)-enoyl-[ACP] + H2O. Its function is as follows. Involved in unsaturated fatty acids biosynthesis. Catalyzes the dehydration of short chain beta-hydroxyacyl-ACPs and long chain saturated and unsaturated beta-hydroxyacyl-ACPs. The sequence is that of 3-hydroxyacyl-[acyl-carrier-protein] dehydratase FabZ from Chlamydia muridarum (strain MoPn / Nigg).